The sequence spans 447 residues: UDP-N-acetylmuramate--L-alanine ligase (447 aa).

115–121 (GAHGKTS) is a binding site for ATP.

It belongs to the MurCDEF family.

The protein resides in the cytoplasm. It catalyses the reaction UDP-N-acetyl-alpha-D-muramate + L-alanine + ATP = UDP-N-acetyl-alpha-D-muramoyl-L-alanine + ADP + phosphate + H(+). Its pathway is cell wall biogenesis; peptidoglycan biosynthesis. Its function is as follows. Cell wall formation. The sequence is that of UDP-N-acetylmuramate--L-alanine ligase from Streptococcus thermophilus (strain CNRZ 1066).